The chain runs to 494 residues: Cobyric acid synthase (494 aa).

The GATase cobBQ-type domain occupies 248–444; that stretch reads EIEIAIIKLP…LHGIFENDEW (197 aa). Cysteine 329 serves as the catalytic Nucleophile. Histidine 436 is a catalytic residue.

The protein belongs to the CobB/CobQ family. CobQ subfamily.

Its pathway is cofactor biosynthesis; adenosylcobalamin biosynthesis. Catalyzes amidations at positions B, D, E, and G on adenosylcobyrinic A,C-diamide. NH(2) groups are provided by glutamine, and one molecule of ATP is hydrogenolyzed for each amidation. The protein is Cobyric acid synthase of Prochlorococcus marinus (strain NATL1A).